A 182-amino-acid chain; its full sequence is Large ribosomal subunit protein uL6 (182 aa).

It belongs to the universal ribosomal protein uL6 family. As to quaternary structure, part of the 50S ribosomal subunit.

Its function is as follows. This protein binds to the 23S rRNA, and is important in its secondary structure. It is located near the subunit interface in the base of the L7/L12 stalk, and near the tRNA binding site of the peptidyltransferase center. The protein is Large ribosomal subunit protein uL6 of Nostoc sp. (strain PCC 7120 / SAG 25.82 / UTEX 2576).